The sequence spans 189 residues: Peptidyl-tRNA hydrolase (189 aa).

TRNA is bound at residue tyrosine 14. Histidine 19 (proton acceptor) is an active-site residue. Tyrosine 64, asparagine 66, and asparagine 112 together coordinate tRNA.

Belongs to the PTH family. As to quaternary structure, monomer.

Its subcellular location is the cytoplasm. It catalyses the reaction an N-acyl-L-alpha-aminoacyl-tRNA + H2O = an N-acyl-L-amino acid + a tRNA + H(+). Functionally, hydrolyzes ribosome-free peptidyl-tRNAs (with 1 or more amino acids incorporated), which drop off the ribosome during protein synthesis, or as a result of ribosome stalling. In terms of biological role, catalyzes the release of premature peptidyl moieties from peptidyl-tRNA molecules trapped in stalled 50S ribosomal subunits, and thus maintains levels of free tRNAs and 50S ribosomes. This chain is Peptidyl-tRNA hydrolase, found in Dehalococcoides mccartyi (strain ATCC BAA-2266 / KCTC 15142 / 195) (Dehalococcoides ethenogenes (strain 195)).